The primary structure comprises 332 residues: Phospholipase A2 inhibitor beta (332 aa).

Positions 1–23 are cleaved as a signal peptide; the sequence is MKSSVPSLLFVSLVMSLNSYTQQ. An N-linked (GlcNAc...) asparagine glycan is attached at Asn-35. LRR repeat units lie at residues 78–101, 103–125, 127–149, 150–173, 175–197, 198–221, 223–245, and 247–269; these read LPNLQELHLSNNRLKTLPSGLFRN, PELHTLDLSTNLLEDLPPEIFTS, TSLTLLSISENRLAKLRLSWFET, LKELRILSLDNNQLKEVPISCFDK, EKLTFLDLSSNHLHRLSPDMFSG, LDNLERLSLENNPIRCIAPKSFHG, PKLSIISLKNCSLTNIITGVFQP, and NHXVLLDLSDNELTMLDPPVAIP. N-linked (GlcNAc...) asparagine glycosylation is present at Asn-232. N-linked (GlcNAc...) asparagine glycosylation is present at Asn-272. The LRRCT domain maps to 280 to 331; that stretch reads NPWACNCRMDNLLTWVKEHKIDLYSKQEIVCAFPKSFKGEEATSLHRSQICP.

This sequence belongs to the beta-type phospholipase A2 inhibitor family. Homotrimer.

The protein localises to the secreted. Its function is as follows. Inhibits the enzymatic activity of the basic phospholipase A2 (PLA2). The chain is Phospholipase A2 inhibitor beta from Elaphe climacophora (Japanese rat snake).